A 122-amino-acid polypeptide reads, in one-letter code: Protein 7a (122 aa).

The first 15 residues, 1-15 (MKIILFLTLIALATC), serve as a signal peptide directing secretion. Positions 16–81 (ELYHYQECVR…RHTYQLRARS (66 aa)) constitute an X4e domain. At 16 to 96 (ELYHYQECVR…FIRQEEVYQE (81 aa)) the chain is on the virion surface side. 2 disulfide bridges follow: cysteine 23/cysteine 58 and cysteine 35/cysteine 67. The helical transmembrane segment at 97 to 117 (LYSPLFLIVAALVFIILCFTI) threads the bilayer. The Intravirion segment spans residues 118 to 122 (KRKTE). The Di-lysine motif motif lies at 118–122 (KRKTE).

In terms of assembly, interacts with the spike glycoprotein, M protein, E protein and the accessory protein 3.

The protein localises to the virion. It is found in the host endoplasmic reticulum membrane. The protein resides in the host endoplasmic reticulum-Golgi intermediate compartment membrane. Its subcellular location is the host Golgi apparatus membrane. Non-structural protein which is dispensable for virus replication in cell culture. This Bat coronavirus HKU3 (BtCoV) protein is Protein 7a.